We begin with the raw amino-acid sequence, 476 residues long: MVAAPTSPAELKLGVDCVIADINLADFGRKELDIAETEMPGLMALREKYGSEKPLKGARIAGSLHMTIQTAVLIETLVELGAEVRWASCNIFSTQDHAAAAIAAKGIPVFAVKGETLEEYWDYTHSILEWGDGGSPNMILDDGGDATGLVMLGSKAEQDITVLDNPGNEEETFLFASIKKKLAQDPTFYSRTKAQIQGVTEETTTGVARLYKMQKSGELPFPAINVNDSVTKSKFDNLYGCRESLVDSIKRATDVMVAGKQALVIGYGDVGKGSAQSLRGLGATVCIAEVDPICALQAAMEGYRVVRLEDVVEDMDIFVTATGNYQVIRNEHLVKMKDEAIVCNIGHFDNEIDVASLKEYEWENIKPQVDHITLPSGNRIILLAEGRLVNLGCATGHPSFVMSNSFTNQVLAQIELFTKGDEYAKEVYVLPKHLDEMVARLHLGRIGANLTELSKDQADYINVPVEGPYKPDHYRY.

The substrate site is built by threonine 67, aspartate 142, and glutamate 202. 203-205 serves as a coordination point for NAD(+); it reads TTT. Substrate-binding residues include lysine 232 and aspartate 236. NAD(+) contacts are provided by residues asparagine 237, 266-271, glutamate 289, asparagine 324, 345-347, and asparagine 390; these read GYGDVG and IGH.

It belongs to the adenosylhomocysteinase family. The cofactor is NAD(+).

It localises to the cytoplasm. The catalysed reaction is S-adenosyl-L-homocysteine + H2O = L-homocysteine + adenosine. The protein operates within amino-acid biosynthesis; L-homocysteine biosynthesis; L-homocysteine from S-adenosyl-L-homocysteine: step 1/1. In terms of biological role, may play a key role in the regulation of the intracellular concentration of adenosylhomocysteine. The polypeptide is Adenosylhomocysteinase (Synechococcus sp. (strain CC9605)).